The chain runs to 392 residues: 6-aminohexanoate-dimer hydrolase (392 aa).

A disordered region spans residues 1-22 (MNARSTGQHPARYPGAAAGEPT). Residue serine 112 is part of the active site.

It carries out the reaction [N-(6-aminohexanoyl)](n) + H2O = [N-(6-aminohexanoyl)](n-1) + 6-aminohexanoate. It catalyses the reaction N-(6-aminohexanoyl)-6-aminohexanoate + H2O = 2 6-aminohexanoate. It participates in xenobiotic degradation; nylon-6 oligomer degradation. Functionally, involved in nylon oligomer degradation. In Paenarthrobacter ureafaciens, this protein is 6-aminohexanoate-dimer hydrolase.